A 145-amino-acid polypeptide reads, in one-letter code: D-aminoacyl-tRNA deacylase (145 aa).

The short motif at 137–138 (GP) is the Gly-cisPro motif, important for rejection of L-amino acids element.

It belongs to the DTD family. As to quaternary structure, homodimer.

The protein localises to the cytoplasm. The enzyme catalyses glycyl-tRNA(Ala) + H2O = tRNA(Ala) + glycine + H(+). It carries out the reaction a D-aminoacyl-tRNA + H2O = a tRNA + a D-alpha-amino acid + H(+). An aminoacyl-tRNA editing enzyme that deacylates mischarged D-aminoacyl-tRNAs. Also deacylates mischarged glycyl-tRNA(Ala), protecting cells against glycine mischarging by AlaRS. Acts via tRNA-based rather than protein-based catalysis; rejects L-amino acids rather than detecting D-amino acids in the active site. By recycling D-aminoacyl-tRNA to D-amino acids and free tRNA molecules, this enzyme counteracts the toxicity associated with the formation of D-aminoacyl-tRNA entities in vivo and helps enforce protein L-homochirality. The polypeptide is D-aminoacyl-tRNA deacylase (Rhodococcus opacus (strain B4)).